Consider the following 218-residue polypeptide: Heart- and neural crest derivatives-expressed protein 1 (218 aa).

3 disordered regions span residues 1 to 23 (MNLVGSYAHHHHHHHHHHPHPAH), 56 to 112 (APDF…RTES), and 172 to 203 (ADGGRESKRKRELQQHEGFPPALGPGEKRIKG). Residues 8–21 (AHHHHHHHHHHPHP) are compositionally biased toward basic residues. A compositionally biased stretch (low complexity) spans 68-92 (AAAAAASYGPDARPGQSPGRLEALG). A compositionally biased stretch (basic residues) spans 95-107 (LGRRKGSGPKKER). Residues 97-149 (RRKGSGPKKERRRTESINSAFAELRECIPNVPADTKLSKIKTLRLATSYIAYL) enclose the bHLH domain. T110 carries the phosphothreonine; by PLK4 modification. Phosphoserine; by PLK4 is present on S112.

As to quaternary structure, efficient DNA binding requires dimerization with another bHLH protein. Forms homodimers and heterodimers with TCF3 gene products E12 and E47, HAND2 and HEY1, HEY2 and HEYL (hairy-related transcription factors). Interacts with MDFIC. Interacts with SOX15; the interaction enhances HAND1-induced differentiation of trophoblast giant cells. Post-translationally, phosphorylation by PLK4 disrupts the interaction with MDFIC and leads to translocation into the nucleoplasm, allowing dimerization and transcription factor activity.

The protein localises to the nucleus. It is found in the nucleoplasm. It localises to the nucleolus. Functionally, transcription factor that plays an essential role in both trophoblast giant cell differentiation and in cardiac morphogenesis. Binds the DNA sequence 5'-NRTCTG-3' (non-canonical E-box). Acts as a transcriptional repressor of SOX15. In the adult, could be required for ongoing expression of cardiac-specific genes. The polypeptide is Heart- and neural crest derivatives-expressed protein 1 (HAND1) (Bos taurus (Bovine)).